An 880-amino-acid chain; its full sequence is Alanine--tRNA ligase (880 aa).

Positions 565, 569, 675, and 679 each coordinate Zn(2+).

The protein belongs to the class-II aminoacyl-tRNA synthetase family. Zn(2+) serves as cofactor.

It localises to the cytoplasm. The catalysed reaction is tRNA(Ala) + L-alanine + ATP = L-alanyl-tRNA(Ala) + AMP + diphosphate. Its function is as follows. Catalyzes the attachment of alanine to tRNA(Ala) in a two-step reaction: alanine is first activated by ATP to form Ala-AMP and then transferred to the acceptor end of tRNA(Ala). Also edits incorrectly charged Ser-tRNA(Ala) and Gly-tRNA(Ala) via its editing domain. This Granulibacter bethesdensis (strain ATCC BAA-1260 / CGDNIH1) protein is Alanine--tRNA ligase.